Consider the following 1338-residue polypeptide: Aldehyde oxidase 1 (1338 aa).

The 2Fe-2S ferredoxin-type domain occupies 5–92; the sequence is SELLFYVNGR…GTAVTTVEGI (88 aa). Mo-molybdopterin-binding residues include Gln-113 and Cys-151. The FAD-binding PCMH-type domain occupies 236-421; that stretch reads FGSERMMWFS…VSVNIPYSRK (186 aa). FAD contacts are provided by residues 264 to 271, Ala-345, Ser-354, His-358, Asp-367, and Leu-411; that span reads VIMGNTSV. Mo-molybdopterin is bound by residues 806-807 and Met-1047; that span reads AF. Ser-1068 is subject to Phosphoserine. Residues 1088 to 1091, Gln-1203, and Leu-1268 each bind Mo-molybdopterin; that span reads GSVV. Glu-1270 serves as the catalytic Proton acceptor; for azaheterocycle hydroxylase activity.

It belongs to the xanthine dehydrogenase family. In terms of assembly, homodimer. The cofactor is [2Fe-2S] cluster. FAD serves as cofactor. Mo-molybdopterin is required as a cofactor. Detected at high levels in liver, also detected in lung, kidney, lacrimal gland and olfactory mucosa.

The protein resides in the cytoplasm. It catalyses the reaction an aldehyde + O2 + H2O = a carboxylate + H2O2 + H(+). The enzyme catalyses retinal + O2 + H2O = retinoate + H2O2 + H(+). Oxidase with broad substrate specificity, oxidizing aromatic azaheterocycles, such as N1-methylnicotinamide, N-methylphthalazinium and phthalazine, as well as aldehydes, such as benzaldehyde, retinal, pyridoxal, and vanillin. Plays a key role in the metabolism of xenobiotics and drugs containing aromatic azaheterocyclic substituents. Participates in the bioactivation of prodrugs such as famciclovir, catalyzing the oxidation step from 6-deoxypenciclovir to penciclovir, which is a potent antiviral agent. Is probably involved in the regulation of reactive oxygen species homeostasis. May be a prominent source of superoxide generation via the one-electron reduction of molecular oxygen. May also catalyze nitric oxide (NO) production via the reduction of nitrite to NO with NADH or aldehyde as electron donor. May play a role in adipogenesis. The protein is Aldehyde oxidase 1 (AOX1) of Macaca fascicularis (Crab-eating macaque).